Reading from the N-terminus, the 246-residue chain is MSALLILALVGAAVAFPVDDDDKIVGGYTCRESSVPYQVSLNAGYHFCGGSLINDQWVVSAAHCYKYRIQVRLGEHNINVLEGNEQFVDSAKIIRHPNYNSWTLDNDIMLIKLASPVTLNARVASVPLPSSCAPAGTQCLISGWGNTLSNGVNNPDLLQCVDAPVLPQADCEASYPGDITNNMICVGFLEGGKDSCQGDSGGPVVCNGELQGIVSWGYGCAQPDAPGVYTKVCNYVDWIQNTIADN.

A signal peptide spans 1–15; it reads MSALLILALVGAAVA. A propeptide spans 16–23 (activation peptide); the sequence is FPVDDDDK. The Peptidase S1 domain maps to 24-244; that stretch reads IVGGYTCRES…YVDWIQNTIA (221 aa). Disulfide bonds link Cys30–Cys160, Cys48–Cys64, Cys132–Cys233, Cys139–Cys206, Cys171–Cys185, and Cys196–Cys220. The active-site Charge relay system is His63. 4 residues coordinate Ca(2+): Glu75, Asn77, Val80, and Glu85. Residue Asp107 is the Charge relay system of the active site. Ser200 acts as the Charge relay system in catalysis.

Belongs to the peptidase S1 family. Ca(2+) serves as cofactor. In terms of tissue distribution, expressed in the pancreas, lung and kidney.

The protein localises to the secreted. It localises to the extracellular space. It carries out the reaction Preferential cleavage: Arg-|-Xaa, Lys-|-Xaa.. The protein is Anionic trypsin-2 (Prss2) of Mus musculus (Mouse).